Consider the following 465-residue polypeptide: MSQGKIVQIIGAVIDVEFPRDAMPKVYDALKLVDADLTLEVQQQLGDGVVRTIAMGSSDGLKRGMAVANTGAPISVPVGAATLGRIMDVLGNPVDEAGPVATDARRAIHQAAPKFDELSAAADILETGIKVIDLLCPFAKGGKVGLFGGAGVGKTVNMMELINNIAKAHSGLSVFAGVGERTREGNDFYHEMKDSNVLDKVAMVYGQMNEPPGNRLRVALTGLTMAEHFRDEKDENGKGRDVLLFVDNIYRYTLAGTEVSALLGRMPSAVGYQPTLAEEMGRLQERITSTKDGSITSIQAVYVPADDLTDPSPATTFAHLDATVVLSRDIASLGIYPAVDPLDSTSRQLDPLVVGDEHYTVARGVQSTLQRYKELRDIIAILGMDELSEEDKLVVARARKIQRFLSQPFHVAEVFTGSPGKYVPLRETIKGFKAILAGEYDHLPEQAFYMVGAIEEAAEKAKTLN.

148–155 contributes to the ATP binding site; the sequence is GGAGVGKT.

It belongs to the ATPase alpha/beta chains family. In terms of assembly, F-type ATPases have 2 components, CF(1) - the catalytic core - and CF(0) - the membrane proton channel. CF(1) has five subunits: alpha(3), beta(3), gamma(1), delta(1), epsilon(1). CF(0) has three main subunits: a(1), b(2) and c(9-12). The alpha and beta chains form an alternating ring which encloses part of the gamma chain. CF(1) is attached to CF(0) by a central stalk formed by the gamma and epsilon chains, while a peripheral stalk is formed by the delta and b chains.

It is found in the cell inner membrane. The enzyme catalyses ATP + H2O + 4 H(+)(in) = ADP + phosphate + 5 H(+)(out). Its function is as follows. Produces ATP from ADP in the presence of a proton gradient across the membrane. The catalytic sites are hosted primarily by the beta subunits. The chain is ATP synthase subunit beta from Chromobacterium violaceum (strain ATCC 12472 / DSM 30191 / JCM 1249 / CCUG 213 / NBRC 12614 / NCIMB 9131 / NCTC 9757 / MK).